The following is a 102-amino-acid chain: Small ribosomal subunit protein uS10 (102 aa).

The protein belongs to the universal ribosomal protein uS10 family. Part of the 30S ribosomal subunit.

Involved in the binding of tRNA to the ribosomes. This Latilactobacillus sakei subsp. sakei (strain 23K) (Lactobacillus sakei subsp. sakei) protein is Small ribosomal subunit protein uS10.